Consider the following 1392-residue polypeptide: DNA-directed RNA polymerase subunit beta' (1392 aa).

Zn(2+)-binding residues include Cys-70, Cys-72, Cys-85, and Cys-88. Residues Asp-460, Asp-462, and Asp-464 each coordinate Mg(2+). 4 residues coordinate Zn(2+): Cys-810, Cys-884, Cys-891, and Cys-894.

Belongs to the RNA polymerase beta' chain family. As to quaternary structure, the RNAP catalytic core consists of 2 alpha, 1 beta, 1 beta' and 1 omega subunit. When a sigma factor is associated with the core the holoenzyme is formed, which can initiate transcription. Mg(2+) serves as cofactor. Requires Zn(2+) as cofactor.

The enzyme catalyses RNA(n) + a ribonucleoside 5'-triphosphate = RNA(n+1) + diphosphate. Functionally, DNA-dependent RNA polymerase catalyzes the transcription of DNA into RNA using the four ribonucleoside triphosphates as substrates. The chain is DNA-directed RNA polymerase subunit beta' from Geobacter metallireducens (strain ATCC 53774 / DSM 7210 / GS-15).